Here is a 285-residue protein sequence, read N- to C-terminus: (2Z,6Z)-farnesyl diphosphate synthase CPT6, chloroplastic (285 aa).

A chloroplast-targeting transit peptide spans 1–30 (MNSLFVGRPIVKSSYNVYTLPSSICGGHFF). Residue D65 is part of the active site.

Belongs to the UPP synthase family. Mg(2+) serves as cofactor. Expressed in roots and red fruits.

Its subcellular location is the plastid. The protein localises to the chloroplast. The catalysed reaction is 2 isopentenyl diphosphate + dimethylallyl diphosphate = (2Z,6Z)-farnesyl diphosphate + 2 diphosphate. It catalyses the reaction isopentenyl diphosphate + dimethylallyl diphosphate = neryl diphosphate + diphosphate. The enzyme catalyses neryl diphosphate + isopentenyl diphosphate = (2Z,6Z)-farnesyl diphosphate + diphosphate. In terms of biological role, uses neryl diphosphate to catalyze the cis-prenyl chain elongation and produce the 15 carbon product (2Z,6Z)-farnesyl diphosphate. This is (2Z,6Z)-farnesyl diphosphate synthase CPT6, chloroplastic from Solanum lycopersicum (Tomato).